Consider the following 315-residue polypeptide: Cysteine proteinase 2 (315 aa).

Residues 1–13 (MFAFICLLAIASA) form the signal peptide. Positions 14-93 (IDFNTWASKN…NGQVKYLNIQ (80 aa)) are cleaved as a propeptide — activation peptide. Intrachain disulfides connect cysteine 115–cysteine 161 and cysteine 152–cysteine 193. The active site involves cysteine 118. Active-site residues include histidine 259 and asparagine 279.

It belongs to the peptidase C1 family. As to quaternary structure, interacts with cysteine protease inhibitor ICP1. Interacts with cysteine protease inhibitor ICP2.

Its subcellular location is the cell membrane. It is found in the cytoplasmic vesicle. The protein resides in the phagosome. It localises to the secreted. The enzyme catalyses Hydrolysis of proteins, including basement membrane collagen and azocasein. Preferential cleavage: Arg-Arg-|-Xaa in small molecule substrates including Z-Arg-Arg-|-NHMec.. Inhibited by cysteine protease inhibitors ICP1 and ICP2. Inhibited by leupeptin and such inhibitors of cysteine proteinases as L-transepoxysuccinyl-L-leucylamido-(4-guanidino)butane, peptidyldiazomethanes, iodoacetic acid and chicken cystatin. Cysteine protease which degrades matrix proteins such as collagen, laminin and fibronectin and thus is involved in the destruction of human tissue. Can abolish adhesion. May play an important role in pathogenicity. The protein is Cysteine proteinase 2 of Entamoeba histolytica (strain ATCC 30459 / HM-1:IMSS / ABRM).